Here is a 379-residue protein sequence, read N- to C-terminus: UDP-N-acetylglucosamine--N-acetylmuramyl-(pentapeptide) pyrophosphoryl-undecaprenol N-acetylglucosamine transferase (379 aa).

Residues 19–21, asparagine 133, arginine 174, serine 207, isoleucine 261, and glutamine 306 contribute to the UDP-N-acetyl-alpha-D-glucosamine site; that span reads TGG.

This sequence belongs to the glycosyltransferase 28 family. MurG subfamily.

Its subcellular location is the cell inner membrane. The catalysed reaction is di-trans,octa-cis-undecaprenyl diphospho-N-acetyl-alpha-D-muramoyl-L-alanyl-D-glutamyl-meso-2,6-diaminopimeloyl-D-alanyl-D-alanine + UDP-N-acetyl-alpha-D-glucosamine = di-trans,octa-cis-undecaprenyl diphospho-[N-acetyl-alpha-D-glucosaminyl-(1-&gt;4)]-N-acetyl-alpha-D-muramoyl-L-alanyl-D-glutamyl-meso-2,6-diaminopimeloyl-D-alanyl-D-alanine + UDP + H(+). The protein operates within cell wall biogenesis; peptidoglycan biosynthesis. Its function is as follows. Cell wall formation. Catalyzes the transfer of a GlcNAc subunit on undecaprenyl-pyrophosphoryl-MurNAc-pentapeptide (lipid intermediate I) to form undecaprenyl-pyrophosphoryl-MurNAc-(pentapeptide)GlcNAc (lipid intermediate II). This is UDP-N-acetylglucosamine--N-acetylmuramyl-(pentapeptide) pyrophosphoryl-undecaprenol N-acetylglucosamine transferase from Porphyromonas gingivalis (strain ATCC BAA-308 / W83).